A 593-amino-acid polypeptide reads, in one-letter code: Arginine--tRNA ligase (593 aa).

Residues 138-148 (ANPTGPLHVGH) carry the 'HIGH' region motif.

Belongs to the class-I aminoacyl-tRNA synthetase family. As to quaternary structure, monomer.

The protein localises to the cytoplasm. The enzyme catalyses tRNA(Arg) + L-arginine + ATP = L-arginyl-tRNA(Arg) + AMP + diphosphate. In Burkholderia ambifaria (strain ATCC BAA-244 / DSM 16087 / CCUG 44356 / LMG 19182 / AMMD) (Burkholderia cepacia (strain AMMD)), this protein is Arginine--tRNA ligase.